Consider the following 71-residue polypeptide: NAD(P)H-quinone oxidoreductase subunit O (71 aa).

The protein belongs to the complex I NdhO subunit family. NDH-1 can be composed of about 15 different subunits; different subcomplexes with different compositions have been identified which probably have different functions.

It is found in the cellular thylakoid membrane. It carries out the reaction a plastoquinone + NADH + (n+1) H(+)(in) = a plastoquinol + NAD(+) + n H(+)(out). It catalyses the reaction a plastoquinone + NADPH + (n+1) H(+)(in) = a plastoquinol + NADP(+) + n H(+)(out). Functionally, NDH-1 shuttles electrons from an unknown electron donor, via FMN and iron-sulfur (Fe-S) centers, to quinones in the respiratory and/or the photosynthetic chain. The immediate electron acceptor for the enzyme in this species is believed to be plastoquinone. Couples the redox reaction to proton translocation, and thus conserves the redox energy in a proton gradient. Cyanobacterial NDH-1 also plays a role in inorganic carbon-concentration. The sequence is that of NAD(P)H-quinone oxidoreductase subunit O from Nostoc punctiforme (strain ATCC 29133 / PCC 73102).